Here is a 195-residue protein sequence, read N- to C-terminus: Imidazoleglycerol-phosphate dehydratase (195 aa).

It belongs to the imidazoleglycerol-phosphate dehydratase family.

Its subcellular location is the cytoplasm. The enzyme catalyses D-erythro-1-(imidazol-4-yl)glycerol 3-phosphate = 3-(imidazol-4-yl)-2-oxopropyl phosphate + H2O. Its pathway is amino-acid biosynthesis; L-histidine biosynthesis; L-histidine from 5-phospho-alpha-D-ribose 1-diphosphate: step 6/9. In Paraburkholderia xenovorans (strain LB400), this protein is Imidazoleglycerol-phosphate dehydratase.